We begin with the raw amino-acid sequence, 304 residues long: ATP synthase gamma chain (304 aa).

This sequence belongs to the ATPase gamma chain family. F-type ATPases have 2 components, CF(1) - the catalytic core - and CF(0) - the membrane proton channel. CF(1) has five subunits: alpha(3), beta(3), gamma(1), delta(1), epsilon(1). CF(0) has three main subunits: a, b and c.

The protein resides in the cell membrane. Functionally, produces ATP from ADP in the presence of a proton gradient across the membrane. The gamma chain is believed to be important in regulating ATPase activity and the flow of protons through the CF(0) complex. The sequence is that of ATP synthase gamma chain from Mycobacterium marinum (strain ATCC BAA-535 / M).